Here is a 397-residue protein sequence, read N- to C-terminus: Histidinol-phosphate aminotransferase (397 aa).

At Lys-247 the chain carries N6-(pyridoxal phosphate)lysine.

It belongs to the class-II pyridoxal-phosphate-dependent aminotransferase family. Histidinol-phosphate aminotransferase subfamily. As to quaternary structure, homodimer. The cofactor is pyridoxal 5'-phosphate.

The enzyme catalyses L-histidinol phosphate + 2-oxoglutarate = 3-(imidazol-4-yl)-2-oxopropyl phosphate + L-glutamate. It participates in amino-acid biosynthesis; L-histidine biosynthesis; L-histidine from 5-phospho-alpha-D-ribose 1-diphosphate: step 7/9. The protein is Histidinol-phosphate aminotransferase of Frankia casuarinae (strain DSM 45818 / CECT 9043 / HFP020203 / CcI3).